An 83-amino-acid polypeptide reads, in one-letter code: MSGTKKVGSAGRFGPRYGLKIRRRVAAVEAKMRQKHVCPVCGRRAVRRISTGIWQCKKCGAIFAGGAYLPVTPAGKVAKRVVE.

Residues C38, C41, C56, and C59 each contribute to the Zn(2+) site. A C4-type zinc finger spans residues 38 to 59 (CPVCGRRAVRRISTGIWQCKKC).

The protein belongs to the eukaryotic ribosomal protein eL43 family. Putative zinc-binding subfamily. In terms of assembly, part of the 50S ribosomal subunit. It depends on Zn(2+) as a cofactor.

In terms of biological role, binds to the 23S rRNA. In Pyrococcus abyssi (strain GE5 / Orsay), this protein is Large ribosomal subunit protein eL43.